The chain runs to 298 residues: Aquaporin NIP2-1 (298 aa).

N-linked (GlcNAc...) asparagine glycosylation is found at Asn-4, Asn-13, and Asn-26. Helical transmembrane passes span 51–71 and 85–105; these read VVSE…AAGI and SIAG…ISGA. An NPA 1 motif is present at residues 108–110; the sequence is NPA. The next 3 helical transmembrane spans lie at 124-144, 166-186, and 194-214; these read IQVP…SFVL, SLVV…AVAT, and LAGL…GAIS. The short motif at 219 to 221 is the NPA 2 element; sequence NPA. A helical membrane pass occupies residues 237–257; the sequence is WIYFLGPVMGTLSGAWTYTFI.

It belongs to the MIP/aquaporin (TC 1.A.8) family. NIP (TC 1.A.8.12) subfamily. Mainly expressed in the roots. In roots, it localizes in the main and lateral roots, but not in root hairs. Within a root, it localizes on the plasma membrane of the distal side of both exodermis and endodermis, where casparian strips exist (at protein level). Expressed low levels in leaves and anthers.

It localises to the cell membrane. Functionally, silicon influx transporter responsible for silicon transport from the external solution to the root cells. Is coupled with the silicon efflux transporter LSI2 in both exodermal and endodermal root cells for an efficient silicon transport across the cells into the stele. Silicon is beneficial to plant growth and helps plants to overcome abiotic and biotic stresses by preventing lodging (falling over) and increasing resistance to pests and diseases, as well as other stresses. Is coupled with LSI2 transporter in roots for efficient uptake of arsenite, which is further dispatched in shoots and grains. Mediates uptake of methylated arsenic species in roots. The protein is Aquaporin NIP2-1 of Oryza sativa subsp. japonica (Rice).